The sequence spans 29 residues: Inorganic pyrophosphatase (29 aa).

Its subcellular location is the periplasm. It catalyses the reaction diphosphate + H2O = 2 phosphate + H(+). Inorganic pyrophosphatase is an essential enzyme for the activation of sulfate by sulfate reducing bacteria. This is a high activity pyrophosphatase. This chain is Inorganic pyrophosphatase, found in Nitratidesulfovibrio vulgaris (strain ATCC 29579 / DSM 644 / CCUG 34227 / NCIMB 8303 / VKM B-1760 / Hildenborough) (Desulfovibrio vulgaris).